Reading from the N-terminus, the 281-residue chain is MKKWMMAAAVVSLMALSACSNDGSEAIVETKNGNITKDEFYNEMKERVGKSVLRDLIDEKVLSKKYKVTDEEIDREIERIKEAYGTQYDLAVQQNGEKVIREMVKLDLLRTKAAVEDIKVTEKELKEYYDNYKPKIRASHILVKDEKTAKEVKAKLDKGEDFSKLAKEYSQDPGSASNGGDLGWFGPGKMVKEFEEAAYKLKVGEVSDPVKTDYGYHIIKVTDKEKKKSFNEMKDEIAFEVKRNKLDPATMQSKVDKLVKDAGVEIKDKDLQDVIEQQGKQ.

Positions 1–18 (MKKWMMAAAVVSLMALSA) are cleaved as a signal peptide. A lipid anchor (N-palmitoyl cysteine) is attached at Cys19. The S-diacylglycerol cysteine moiety is linked to residue Cys19. Residues 133 to 223 (KPKIRASHIL…YGYHIIKVTD (91 aa)) form the PpiC domain.

It belongs to the PrsA family.

The protein resides in the cell membrane. The enzyme catalyses [protein]-peptidylproline (omega=180) = [protein]-peptidylproline (omega=0). Plays a major role in protein secretion by helping the post-translocational extracellular folding of several secreted proteins. The sequence is that of Foldase protein PrsA from Geobacillus kaustophilus (strain HTA426).